The primary structure comprises 116 residues: Large ribosomal subunit protein bL17 (116 aa).

The protein belongs to the bacterial ribosomal protein bL17 family. In terms of assembly, part of the 50S ribosomal subunit. Contacts protein L32.

The chain is Large ribosomal subunit protein bL17 from Prochlorococcus marinus (strain NATL2A).